Reading from the N-terminus, the 155-residue chain is Deoxyuridine 5'-triphosphate nucleotidohydrolase (155 aa).

Residues 74–76, Asn87, and 91–93 each bind substrate; these read RSG and LID.

This sequence belongs to the dUTPase family. It depends on Mg(2+) as a cofactor.

The enzyme catalyses dUTP + H2O = dUMP + diphosphate + H(+). Its pathway is pyrimidine metabolism; dUMP biosynthesis; dUMP from dCTP (dUTP route): step 2/2. This enzyme is involved in nucleotide metabolism: it produces dUMP, the immediate precursor of thymidine nucleotides and it decreases the intracellular concentration of dUTP so that uracil cannot be incorporated into DNA. The polypeptide is Deoxyuridine 5'-triphosphate nucleotidohydrolase (Xylella fastidiosa (strain M12)).